Reading from the N-terminus, the 126-residue chain is Large ribosomal subunit protein bL20 (126 aa).

The span at M1 to R15 shows a compositional bias: basic residues. The segment at M1–R20 is disordered.

The protein belongs to the bacterial ribosomal protein bL20 family.

Functionally, binds directly to 23S ribosomal RNA and is necessary for the in vitro assembly process of the 50S ribosomal subunit. It is not involved in the protein synthesizing functions of that subunit. The protein is Large ribosomal subunit protein bL20 of Beutenbergia cavernae (strain ATCC BAA-8 / DSM 12333 / CCUG 43141 / JCM 11478 / NBRC 16432 / NCIMB 13614 / HKI 0122).